Consider the following 295-residue polypeptide: MSKSTKLCGKTSCPRSNIFCNLLDKIVKRPSLQFLGQWGYHCYEPRIYRSLAKILRYVDLDGFDALLTDYIAFVEKSGYRFEVSFNLDFTEICVNTILYWVFARKGNPDFVELLLKKTKDYVQDRSCNLALIWRTFTPVYCPSPLSGITPLFYVAQTRQSNIFKILLQYGILEREKNPINIVLTIVLYPSRVRVMVDRELADIHEDAKTCLVLCSRVLSVISVKEIKTQLSLGRHPIISNWFDYIPSTRYKDPCELLHLCRLTIRNQLLTNNMLPDGIFSLLIPARLQNYLNLEI.

Residues 146–176 form an ANK repeat; that stretch reads SGITPLFYVAQTRQSNIFKILLQYGILEREK. One can recognise an SOCS box domain in the interval 232 to 295; that stretch reads LGRHPIISNW…RLQNYLNLEI (64 aa).

It belongs to the ankyrin SOCS box (ASB) family. In terms of tissue distribution, specifically expressed in testis. Not detected in other tissues tested.

Its pathway is protein modification; protein ubiquitination. In terms of biological role, may be a substrate-recognition component of a SCF-like ECS (Elongin-Cullin-SOCS-box protein) E3 ubiquitin-protein ligase complex which mediates the ubiquitination and subsequent proteasomal degradation of target proteins. The polypeptide is Ankyrin repeat and SOCS box protein 17 (ASB17) (Homo sapiens (Human)).